Reading from the N-terminus, the 79-residue chain is Conotoxin MIVA (79 aa).

An N-terminal signal peptide occupies residues 1–21; that stretch reads MGMRMMFTVFLLVVLATTVVS. Residues 22–38 constitute a propeptide that is removed on maturation; sequence IPSDRASDGRNAVVHER. Proline 40 is modified (4-hydroxyproline). Glutamate 41 is modified (4-carboxyglutamate). 2 O-linked (HexNAc...) threonine glycosylation sites follow: threonine 45 and threonine 47. Residues proline 55, proline 60, proline 61, proline 69, proline 70, and proline 74 each carry the 4-hydroxyproline modification. Proline 74 is modified (proline amide). Residues 75–79 constitute a propeptide that is removed on maturation; sequence GRRND.

O-linked glycan consists of Hex4-HexNAc2 hexasaccharide. In terms of processing, contains 3 disulfide bonds. In terms of tissue distribution, expressed by the venom duct.

Its subcellular location is the secreted. Functionally, probable neurotoxin with ion channel inhibitor activity. In Conus magus (Magical cone), this protein is Conotoxin MIVA.